The sequence spans 146 residues: Large ribosomal subunit protein bL19 (146 aa).

This sequence belongs to the bacterial ribosomal protein bL19 family.

This protein is located at the 30S-50S ribosomal subunit interface and may play a role in the structure and function of the aminoacyl-tRNA binding site. This chain is Large ribosomal subunit protein bL19, found in Bartonella quintana (strain Toulouse) (Rochalimaea quintana).